Here is a 176-residue protein sequence, read N- to C-terminus: Nucleoside triphosphate/diphosphate phosphatase (176 aa).

Residue Arg23 is the Proton donor of the active site. Residues Asn87, Asp103, Asp105, Asp107, Asp120, and Glu123 each contribute to the Mg(2+) site.

This sequence belongs to the Ntdp family. The cofactor is Mg(2+).

It carries out the reaction a ribonucleoside 5'-triphosphate + H2O = a ribonucleoside 5'-diphosphate + phosphate + H(+). The enzyme catalyses a ribonucleoside 5'-diphosphate + H2O = a ribonucleoside 5'-phosphate + phosphate + H(+). Has nucleoside phosphatase activity towards nucleoside triphosphates and nucleoside diphosphates. The protein is Nucleoside triphosphate/diphosphate phosphatase of Lactococcus lactis subsp. cremoris (strain MG1363).